Here is a 589-residue protein sequence, read N- to C-terminus: BTB/POZ domain and ankyrin repeat-containing protein NPR3 (589 aa).

Positions 1–25 (METSTISFSSSSPPSPPPPQPAPGD) are disordered. The segment covering 13-22 (PPSPPPPQPA) has biased composition (pro residues). The region spanning 52–137 (AEIVLASGGG…LYTGRLRSAP (86 aa)) is the BTB domain. The segment at 140-154 (AAACLDDGCSHDACR) adopts a C2HC NPR-type zinc-finger fold. Zn(2+)-binding residues include cysteine 143, cysteine 148, histidine 150, and cysteine 153. ANK repeat units lie at residues 260–290 (KRVR…TLDD), 292–319 (FAIH…NVNL), and 323–352 (SGYT…SVLE). A salicylic acid-binding core (SBC) region spans residues 382–521 (ERSKAYLCIG…LDKFLNEEST (140 aa)). Arginine 433 contributes to the salicylate binding site. A disordered region spans residues 555–589 (DKAAGAAISSSTSASSSPRYETKLRPGNKKGKLSR). A compositionally biased stretch (low complexity) spans 558-571 (AGAAISSSTSASSS). Over residues 580 to 589 (PGNKKGKLSR) the composition is skewed to basic residues.

It belongs to the plant 'ANKYRIN-BTB/POZ' family. 'NPR1-like' subfamily. Interacts with TGA2.1, TGA2.2, TGA2.3, LG2, TGAL1, TGAL4, NRR, RH1, RH2 and RH3.

The protein resides in the nucleus. The protein operates within protein modification; protein ubiquitination. Its function is as follows. Salicylic acid (SA)-binding substrate-specific adapter of an E3 ubiquitin-protein ligase complex (CUL3-RBX1-BTB) which mediates the ubiquitination and subsequent proteasomal degradation of target proteins. Involved in defense response against the bacterial blight disease caused by Xanthomonas oryzae pv. oryzae (Xoo). Plants expressing an NPR3/NH3 transgene driven by its native promoter show enhanced resistance to the Xoo pathogen, and exhibit elevated sensitivity to benzothiadiazole (BTH) treatment and enhanced induction of defense-related genes upon treatment with BTH. Intriguingly, constitutive over-expression of NPR3/NH3 with a ubiquitin promoter does not confer disease resistance to Xoo. This is BTB/POZ domain and ankyrin repeat-containing protein NPR3 from Oryza sativa subsp. japonica (Rice).